A 148-amino-acid chain; its full sequence is Small ribosomal subunit protein bS6 (148 aa).

Residues 96 to 148 (HEEGQSAMLTRRDDRRERDGDDRPRRREGGFDRGDRGDRGPRRPRDTEAGEGA) are disordered.

Belongs to the bacterial ribosomal protein bS6 family.

Functionally, binds together with bS18 to 16S ribosomal RNA. This chain is Small ribosomal subunit protein bS6, found in Brucella canis (strain ATCC 23365 / NCTC 10854 / RM-666).